Here is a 2477-residue protein sequence, read N- to C-terminus: Spectrin alpha chain, non-erythrocytic 1 (2477 aa).

The tract at residues 1 to 14 (MDPSGVKVLETAED) is N-terminal domain. Spectrin repeat units follow at residues 45–146 (RFQF…VKLL), 150–251 (KLVQ…QGKL), 256–358 (EVQR…ARLN), 361–465 (YRLQ…QYEQ), 468–570 (DLQL…AQLA), 574–676 (HLQQ…KLRE), 679–781 (QQQQ…QKLA), 785–888 (RLQQ…DLED), 891–969 (QAQQ…ETGK), and 1096–1162 (LFRE…SEGL). In terms of domain architecture, SH3 spans 967 to 1026 (TGKELVLALYDYQEKSPREVTMKKGDILTLLNSTNKDWWKVEVNDRQGFVPAAYVKKLDP). A Phosphotyrosine modification is found at Y1176. Spectrin repeat units follow at residues 1234–1336 (EVQR…EKLG), 1339–1442 (HDLQ…MMLD), 1446–1549 (ELQL…KLGE), 1552–1661 (TLQQ…KLKE), 1664–1767 (KQQN…KLNE), 1769–1873 (HRLH…RLEE), 1876–1979 (EYQQ…KLDE), 1983–2086 (FLQF…KLLE), 2097–2199 (LFLT…LELQ), and 2211–2315 (LRQE…NLEQ). Residues 2257-2477 (HQEIRAMRSQ…IEFTRSLFVN (221 aa)) form a C-terminal domain region. EF-hand domains are found at residues 2328-2363 (EALKEFSMMFKHFDKDKSGRLNHQEFKSCLRSLGYD), 2371-2406 (EPDPEFESILDTVDPNRDGHVSLQEYMAFMISRETE), and 2409-2444 (KSSEEIESAFRALSSERKPYVTKEELYQNLTREQAD). The Ca(2+) site is built by D2341, D2343, S2345, R2347, E2352, D2384, N2386, D2388, H2390, and E2395.

The protein belongs to the spectrin family. Like erythrocyte spectrin, the spectrin-like proteins are capable of forming dimers which can further associate to tetramers. Interacts with ACP1. Post-translationally, phosphorylation of Tyr-1176 decreases sensitivity to cleavage by calpain in vitro.

Its subcellular location is the cytoplasm. It localises to the cytoskeleton. The protein localises to the cell cortex. Functionally, morphologically, spectrin-like proteins appear to be related to spectrin, showing a flexible rod-like structure. They can bind actin but seem to differ in their calmodulin-binding activity. In nonerythroid tissues, spectrins, in association with some other proteins, may play an important role in membrane organization. The polypeptide is Spectrin alpha chain, non-erythrocytic 1 (SPTAN1) (Gallus gallus (Chicken)).